Reading from the N-terminus, the 878-residue chain is Leucine--tRNA ligase (878 aa).

Low complexity predominate over residues 1-14; the sequence is MTASKSSSATASAS. The disordered stretch occupies residues 1–23; the sequence is MTASKSSSATASASDRPDRYDPI. Positions 58 to 68 match the 'HIGH' region motif; sequence PYPSGSLHMGH. The 'KMSKS' region motif lies at 632-636; it reads KMSKS. K635 is a binding site for ATP.

Belongs to the class-I aminoacyl-tRNA synthetase family.

It localises to the cytoplasm. It catalyses the reaction tRNA(Leu) + L-leucine + ATP = L-leucyl-tRNA(Leu) + AMP + diphosphate. The protein is Leucine--tRNA ligase of Synechococcus sp. (strain WH7803).